The chain runs to 240 residues: LOB domain-containing protein 39 (240 aa).

Positions 1–107 constitute an LOB domain; that stretch reads MSCNGCRVLR…VETVLRGGTL (107 aa). The interval 200 to 233 is disordered; it reads GDRPGSPSEESVTTSCWENGMRGDNKQKRNKGEK. Positions 207–216 are enriched in polar residues; the sequence is SEESVTTSCW.

This sequence belongs to the LOB domain-containing protein family. Expressed in young shoots, roots, stems, leaves and flowers.

This is LOB domain-containing protein 39 (LBD39) from Arabidopsis thaliana (Mouse-ear cress).